Consider the following 358-residue polypeptide: UDP-N-acetylglucosamine--N-acetylmuramyl-(pentapeptide) pyrophosphoryl-undecaprenol N-acetylglucosamine transferase (358 aa).

UDP-N-acetyl-alpha-D-glucosamine is bound by residues 10–12, asparagine 124, arginine 165, serine 191, isoleucine 246, and glutamine 291; that span reads TGG.

This sequence belongs to the glycosyltransferase 28 family. MurG subfamily.

The protein resides in the cell inner membrane. The enzyme catalyses di-trans,octa-cis-undecaprenyl diphospho-N-acetyl-alpha-D-muramoyl-L-alanyl-D-glutamyl-meso-2,6-diaminopimeloyl-D-alanyl-D-alanine + UDP-N-acetyl-alpha-D-glucosamine = di-trans,octa-cis-undecaprenyl diphospho-[N-acetyl-alpha-D-glucosaminyl-(1-&gt;4)]-N-acetyl-alpha-D-muramoyl-L-alanyl-D-glutamyl-meso-2,6-diaminopimeloyl-D-alanyl-D-alanine + UDP + H(+). Its pathway is cell wall biogenesis; peptidoglycan biosynthesis. Functionally, cell wall formation. Catalyzes the transfer of a GlcNAc subunit on undecaprenyl-pyrophosphoryl-MurNAc-pentapeptide (lipid intermediate I) to form undecaprenyl-pyrophosphoryl-MurNAc-(pentapeptide)GlcNAc (lipid intermediate II). This is UDP-N-acetylglucosamine--N-acetylmuramyl-(pentapeptide) pyrophosphoryl-undecaprenol N-acetylglucosamine transferase from Citrifermentans bemidjiense (strain ATCC BAA-1014 / DSM 16622 / JCM 12645 / Bem) (Geobacter bemidjiensis).